Reading from the N-terminus, the 237-residue chain is Homeobox protein Nkx-3.1 (237 aa).

Basic and acidic residues predominate over residues 1–14 (MLRVAEPREPRVEA). Disordered regions lie at residues 1 to 96 (MLRV…EPES) and 108 to 130 (EHNP…RSRA). Over residues 24–34 (PTQSKRLTSFL) the composition is skewed to polar residues. 2 stretches are compositionally biased toward basic and acidic residues: residues 38-47 (ILRDRAERHG) and 57-71 (PDPR…DKAG). Residues 125 to 184 (QKRSRAAFSHTQVIELERKFSHQKYLSAPERAHLAKNLKLTETQVKIWFQNRRYKTKRKQ) constitute a DNA-binding region (homeobox).

The protein belongs to the NK-3 homeobox family. Interacts with serum response factor (SRF). Interacts with SPDEF. Interacts with WDR77. Interacts with TOPORS which polyubiquitinates NKX3-1 and induces its proteasomal degradation. Interacts with FEM1B. Post-translationally, ubiquitinated by TOPORS; monoubiquitinated at several residues and also polyubiquitinated on single residues. Expressed mostly in the male urogenital tract, with highest expression in the epithelial cells lining the ducts of anterior, dorsolateral and ventral prostate and in the bulbourethral gland, and much lower in the seminal vesicle and the testis. Expression in the prostate increases during sexual maturation and is drastically reduced following castration. Expressed also in brain (hippocampus and external granular layer of the cerebral cortex), kidney (intralobular arteries), thymus and adrenal and salivary glands.

The protein resides in the nucleus. Its function is as follows. Transcription factor, which binds preferentially the consensus sequence 5'-TAAGT[AG]-3' and can behave as a transcriptional repressor. Plays an important role in normal prostate development, regulating proliferation of glandular epithelium and in the formation of ducts in prostate. Acts as a tumor suppressor controlling prostate carcinogenesis, as shown by the ability to suppress growth and tumorigenicity of prostate carcinoma cells. Plays a role in the formation of minor salivary glands (particularly palatine and lingual glands). This chain is Homeobox protein Nkx-3.1, found in Mus musculus (Mouse).